Reading from the N-terminus, the 172-residue chain is MNPFRWGFRAQFLLGFLACAGLLAYAIYVQLHLGLEPCPLCIFQRIAFATLALLFLLGALHGPRGAGGRKAYGVLAFIAAGVGMGIAARHVWVQIRPKDMMSSCGPPLSFLSETMGPFEVFRTVLTGTGDCGNIDWRFLGLSMPMWSMVWFVGLALWALYAGFKHRGPRKLF.

Over 1–11 the chain is Cytoplasmic; sequence MNPFRWGFRAQ. The helical transmembrane segment at 12 to 28 threads the bilayer; it reads FLLGFLACAGLLAYAIY. Residues 29 to 46 are Periplasmic-facing; sequence VQLHLGLEPCPLCIFQRI. The cysteines at positions 38 and 41 are disulfide-linked. A helical membrane pass occupies residues 47–63; the sequence is AFATLALLFLLGALHGP. The Cytoplasmic segment spans residues 64 to 70; that stretch reads RGAGGRK. Residues 71-88 form a helical membrane-spanning segment; it reads AYGVLAFIAAGVGMGIAA. Residues 89–145 are Periplasmic-facing; sequence RHVWVQIRPKDMMSSCGPPLSFLSETMGPFEVFRTVLTGTGDCGNIDWRFLGLSMPM. Residues cysteine 104 and cysteine 131 are joined by a disulfide bond. Residues 146–164 traverse the membrane as a helical segment; the sequence is WSMVWFVGLALWALYAGFK. Topologically, residues 165–172 are cytoplasmic; it reads HRGPRKLF.

It belongs to the DsbB family.

Its subcellular location is the cell inner membrane. Its function is as follows. Required for disulfide bond formation in some periplasmic proteins. Acts by oxidizing the DsbA protein. This chain is Disulfide bond formation protein B, found in Xanthomonas campestris pv. campestris (strain 8004).